A 417-amino-acid polypeptide reads, in one-letter code: UPF0754 membrane protein PCC8801_0398 (417 aa).

A run of 2 helical transmembrane segments spans residues 11-31 and 395-415; these read FSLL…GYFT and IVNI…ILLI.

This sequence belongs to the UPF0754 family.

The protein resides in the cell inner membrane. This Rippkaea orientalis (strain PCC 8801 / RF-1) (Cyanothece sp. (strain PCC 8801)) protein is UPF0754 membrane protein PCC8801_0398.